The following is a 102-amino-acid chain: Large ribosomal subunit protein bL21 (102 aa).

The protein belongs to the bacterial ribosomal protein bL21 family. As to quaternary structure, part of the 50S ribosomal subunit. Contacts protein L20.

This protein binds to 23S rRNA in the presence of protein L20. This Citrifermentans bemidjiense (strain ATCC BAA-1014 / DSM 16622 / JCM 12645 / Bem) (Geobacter bemidjiensis) protein is Large ribosomal subunit protein bL21.